The following is a 130-amino-acid chain: Small ribosomal subunit protein uS8 (130 aa).

Belongs to the universal ribosomal protein uS8 family. Part of the 30S ribosomal subunit. Contacts proteins S5 and S12.

Its function is as follows. One of the primary rRNA binding proteins, it binds directly to 16S rRNA central domain where it helps coordinate assembly of the platform of the 30S subunit. This chain is Small ribosomal subunit protein uS8, found in Shewanella denitrificans (strain OS217 / ATCC BAA-1090 / DSM 15013).